Consider the following 751-residue polypeptide: MATPFKVLIVGGGVAGLSLAIMLEAYGFDYELLEKHPDVAPKLGAGVGLTPNGARILDQIGVWDSMCEYASPVDAGIALSPTGNTVIFNPHMGEWLEKLFGYKIHFLSRHDCLRILFDKIKQKSNIHLRKEVTRISVGQPGEKAQVETKDGSTYIADLVIGADGVRSSVRNELWRIADTEKPGYIPNRDKSGIVSIYTAVIGIAHDPGLPRGGSARAYNHLRSYFTQEGVEGSGVFYWWLCTKNEEPIKGIVPKLSSDTKQTLLDKYADDQIGHGLTLGGLYKKSVYSAIIPLQEFVLEKCFYKNILLIGDTFRKLHPVAGQGANSAIEESALVADILWQLRENNALHDAAGMKQALTEFQEERFVRTTALREDANLVQRMESFDNLFMKFLSLHVIPRLPFVVAFLPQLGSAFTPARCMKYLPPPKAGMCPFSPDMQAKPNPRSPLATISWIVFLTLAACFPWSVHRLLPASSSSLPGFSEVFQLYTSVMAVSISGLWVIESYKASLLISPMFSSLPWILASNYWGWDKTLPVYLCFHVISSQHTVHYYTPQFMTDLGAAKALLPCLAMAYSIPGILTALASTDQTLSDWWPVAHCTFPVLVYVSSTFLRGMKAVPQGVEVVFSSVDLPYQRRFLTAIAVVSSAVHVTLIWNHGAALLNEGIISLLSVPLARTLASLTALIVAWGIYMTWEMRRIFATEVSLVKAWAVILVSTVLLGPAASLAGATYWSKVMLEKATSMQPLVQPTNGKS.

Residues 8–28 (LIVGGGVAGLSLAIMLEAYGF) traverse the membrane as a helical segment. Glu-34, Gly-48, and Arg-109 together coordinate FAD. Residue Tyr-218 is part of the active site. Positions 311 and 324 each coordinate FAD. A run of 8 helical transmembrane segments spans residues 446 to 466 (PLATISWIVFLTLAACFPWSV), 481 to 501 (SEVFQLYTSVMAVSISGLWVI), 508 to 528 (LLISPMFSSLPWILASNYWGW), 563 to 583 (ALLPCLAMAYSIPGILTALAS), 590 to 610 (DWWPVAHCTFPVLVYVSSTFL), 639 to 659 (IAVVSSAVHVTLIWNHGAALL), 663 to 683 (IISLLSVPLARTLASLTALIV), and 706 to 726 (AWAVILVSTVLLGPAASLAGA).

The protein belongs to the paxM FAD-dependent monooxygenase family. FAD serves as cofactor.

The protein localises to the membrane. It functions in the pathway secondary metabolite biosynthesis; terpenoid biosynthesis. In terms of biological role, FAD-dependent monooxygenase; part of the gene cluster that mediates the biosynthesis of the meroterpenoids arthripenoids. The pathway begins with the HR-PKS atnH that catalyzes two chain-extension steps to form a reduced triketide, which then primes the SAT domain in the NR-PKS atnG to initiate three more cycles of extension to give a linear hexaketide corresponding to the polyketide part of arthripenoids. The FAD-dependent monooxygenase atnJ then performs an oxidative decarboxylation at C11 of the atnH/atnG product, via an electrophilic aromatic hydroxylation with concomitant ipso-decarboxylation. The membrane-bound polyprenyl transferase atnF then introduces a farnesyl group before the FAD-dependent monooxygenase atnK functions as the first epoxidase on terminal C12'-C13' olefin, followed by a second epoxidation on C7'-C8' catalyzed by atnA. The terpene cyclase/mutase atnI then initiates the sequential tricyclic ring formation through protonation of the terminal epoxide and catalyzes the regioselective and stereoselective 6/6/6-tricyclic ring formation. The cytochrome P450 monooxygenase atnM is responsible for hydroxylating both C1' and C10'. The next steps may involve ketoreduction and acetyl transfer by the ketoreductase atnB and the acetyltransferase atnC, and lead to the production of arthripenoid B, the final biosynthetic product of the atn cluster. The hydroquinone moiety in arthripenoid B is prone to undergo spontaneous oxidation to afford a benzoquinone compound, a key intermediate for generating structure diversity. For instance, addition of a cysteine followed by ring contraction gives arthripenoid A, tautomerization gives the main product arthripenoid C, addition of a molecular of water or amine affords arthripenoid D or E, respectively, and loss of one water forms arthripenoid F. This chain is FAD-dependent monooxygenase atnA, found in Arthrinium sp.